We begin with the raw amino-acid sequence, 153 residues long: MTDPVPPRIAIVVSQFNPEVTDGLLKGALDHLAAQGAPVAAPDIIAAPGAYELPLIAQTLARTGRYAGVVCLGCVIKGETAHFEFISLGASLGLMAAGLQTETPVSFGVLTTYTDEQAVARSRDDAENKGREAANACLSTVQTLRRIRENALA.

5-amino-6-(D-ribitylamino)uracil-binding positions include Phe16, 50–52, and 74–76; these read AYE and CVI. A (2S)-2-hydroxy-3-oxobutyl phosphate-binding site is contributed by 79–80; the sequence is ET. Residue His82 is the Proton donor of the active site. Position 107 (Phe107) interacts with 5-amino-6-(D-ribitylamino)uracil. Arg121 is a (2S)-2-hydroxy-3-oxobutyl phosphate binding site.

The protein belongs to the DMRL synthase family.

The enzyme catalyses (2S)-2-hydroxy-3-oxobutyl phosphate + 5-amino-6-(D-ribitylamino)uracil = 6,7-dimethyl-8-(1-D-ribityl)lumazine + phosphate + 2 H2O + H(+). It participates in cofactor biosynthesis; riboflavin biosynthesis; riboflavin from 2-hydroxy-3-oxobutyl phosphate and 5-amino-6-(D-ribitylamino)uracil: step 1/2. Catalyzes the formation of 6,7-dimethyl-8-ribityllumazine by condensation of 5-amino-6-(D-ribitylamino)uracil with 3,4-dihydroxy-2-butanone 4-phosphate. This is the penultimate step in the biosynthesis of riboflavin. This Caulobacter vibrioides (strain ATCC 19089 / CIP 103742 / CB 15) (Caulobacter crescentus) protein is 6,7-dimethyl-8-ribityllumazine synthase 1.